The primary structure comprises 215 residues: MKFFIDTAEIEEIRQANLRGWVDGVTTNPSLIAKSGKDFHTVIKEICKEITGPVSAEVISLQHEEMVREGKELAKLASNVVVKIPMCEDGMIAVKKLKSEGIKTNVTLVFSPMQALLAAKAGATMVSPFVGRLDDIGVEGMQMVDQVIQMYRNYDFETEVLVASVRSPMHIQLAAEMGADIATIPFKVMQSMTHHPLTDKGIKMFMDDWNKAQKK.

Lys83 (schiff-base intermediate with substrate) is an active-site residue.

It belongs to the transaldolase family. Type 3B subfamily.

It is found in the cytoplasm. The catalysed reaction is D-sedoheptulose 7-phosphate + D-glyceraldehyde 3-phosphate = D-erythrose 4-phosphate + beta-D-fructose 6-phosphate. Its pathway is carbohydrate degradation; pentose phosphate pathway; D-glyceraldehyde 3-phosphate and beta-D-fructose 6-phosphate from D-ribose 5-phosphate and D-xylulose 5-phosphate (non-oxidative stage): step 2/3. In terms of biological role, transaldolase is important for the balance of metabolites in the pentose-phosphate pathway. The chain is Probable transaldolase from Bdellovibrio bacteriovorus (strain ATCC 15356 / DSM 50701 / NCIMB 9529 / HD100).